The following is a 308-amino-acid chain: MAAAAEESGWRRVGFVGAGRMAEAIAQGLIQAGKVEAEHVLASAPSDRNLCRFRAMGCQTTHSNLEVLHSCSLVFFATKPHILPAVLVEVAPAVTAEHILVSVAAGVSLSTLEKLLPPMARVLRVSPNLPCIVQEGAMVMARGCCAGSYEAQLLRSLLEACGQCEEVPEAQVDVHTGLSGSGVAFVCAFSEALAEGAIKMGMPSGLAHRIAAQTLLGTAKVLLQKGQHPAQLRTDVCTPGGTTIYGLHVLEQGGLRATAMSAVEAATCRARELSRNPSPVVAQVPSVLQALQGEGALAHREHSSVARS.

This sequence belongs to the pyrroline-5-carboxylate reductase family. In terms of assembly, homodecamer; composed of 5 homodimers.

It is found in the cytoplasm. It catalyses the reaction L-proline + NADP(+) = (S)-1-pyrroline-5-carboxylate + NADPH + 2 H(+). The enzyme catalyses L-proline + NAD(+) = (S)-1-pyrroline-5-carboxylate + NADH + 2 H(+). It participates in amino-acid biosynthesis; L-proline biosynthesis; L-proline from L-glutamate 5-semialdehyde: step 1/1. Oxidoreductase that catalyzes the last step in proline biosynthesis, which corresponds to the reduction of pyrroline-5-carboxylate (P5C) to L-proline using NAD(P)H. Proline is synthesized from either glutamate or ornithine; both are converted to P5C, and then to proline via pyrroline-5-carboxylate reductases (PYCRs). PYCR3 is exclusively linked to the biosynthesis of proline from ornithine. The protein is Pyrroline-5-carboxylate reductase 3 of Bos taurus (Bovine).